A 253-amino-acid polypeptide reads, in one-letter code: 5'/3'-nucleotidase SurE (253 aa).

Residues D8, D9, S39, and N92 each coordinate a divalent metal cation.

Belongs to the SurE nucleotidase family. The cofactor is a divalent metal cation.

Its subcellular location is the cytoplasm. The enzyme catalyses a ribonucleoside 5'-phosphate + H2O = a ribonucleoside + phosphate. The catalysed reaction is a ribonucleoside 3'-phosphate + H2O = a ribonucleoside + phosphate. It catalyses the reaction [phosphate](n) + H2O = [phosphate](n-1) + phosphate + H(+). Nucleotidase with a broad substrate specificity as it can dephosphorylate various ribo- and deoxyribonucleoside 5'-monophosphates and ribonucleoside 3'-monophosphates with highest affinity to 3'-AMP. Also hydrolyzes polyphosphate (exopolyphosphatase activity) with the preference for short-chain-length substrates (P20-25). Might be involved in the regulation of dNTP and NTP pools, and in the turnover of 3'-mononucleotides produced by numerous intracellular RNases (T1, T2, and F) during the degradation of various RNAs. In Erwinia tasmaniensis (strain DSM 17950 / CFBP 7177 / CIP 109463 / NCPPB 4357 / Et1/99), this protein is 5'/3'-nucleotidase SurE.